A 365-amino-acid polypeptide reads, in one-letter code: Protein mab-21-like (365 aa).

This sequence belongs to the mab-21 family.

The polypeptide is Protein mab-21-like (Aedes aegypti (Yellowfever mosquito)).